A 1582-amino-acid polypeptide reads, in one-letter code: Alpha-2-macroglobulin (1582 aa).

Residues 1–15 (MICLAALAVAVPARA) form the signal peptide. The isoglutamyl cysteine thioester (Cys-Gln) cross-link spans 1080–1083 (CAEQ).

It belongs to the protease inhibitor I39 (alpha-2-macroglobulin) family. Bacterial alpha-2-macroglobulin subfamily.

Its function is as follows. Protects the bacterial cell from host peptidases. The polypeptide is Alpha-2-macroglobulin (Ralstonia nicotianae (strain ATCC BAA-1114 / GMI1000) (Ralstonia solanacearum)).